We begin with the raw amino-acid sequence, 284 residues long: L-ribulose-5-phosphate 3-epimerase UlaE (284 aa).

This sequence belongs to the L-ribulose-5-phosphate 3-epimerase family.

It carries out the reaction L-ribulose 5-phosphate = L-xylulose 5-phosphate. It participates in cofactor degradation; L-ascorbate degradation; D-xylulose 5-phosphate from L-ascorbate: step 3/4. Functionally, catalyzes the isomerization of L-xylulose-5-phosphate to L-ribulose-5-phosphate. Is involved in the anaerobic L-ascorbate utilization. This Escherichia coli (strain SMS-3-5 / SECEC) protein is L-ribulose-5-phosphate 3-epimerase UlaE.